Here is a 47-residue protein sequence, read N- to C-terminus: Conotoxin Cal6.18 (47 aa).

The first 19 residues, 1–19 (MKLTYVLIVAMLVLVVCRA), serve as a signal peptide directing secretion.

Belongs to the conotoxin O1 superfamily. In terms of processing, may contain 3 disulfide bonds. As to expression, expressed by the venom duct.

Its subcellular location is the secreted. Its function is as follows. Probable neurotoxin. This is Conotoxin Cal6.18 from Californiconus californicus (California cone).